We begin with the raw amino-acid sequence, 465 residues long: Indoleacetamide hydrolase (465 aa).

The interval 1–40 (MVRGRHRSRDPQRRDLRGRDRRSASRTDARRQSAAERGCR) is disordered. Basic and acidic residues predominate over residues 9-39 (RDPQRRDLRGRDRRSASRTDARRQSAAERGC). Residue Ser149 is the Charge relay system of the active site. Ser173 (acyl-ester intermediate) is an active-site residue.

This sequence belongs to the amidase family.

It participates in plant hormone metabolism; auxin biosynthesis. Functionally, hydrolyzes indole-3-acetamide (IAM) into indole-3-acetic acid (IAA). The polypeptide is Indoleacetamide hydrolase (bam) (Bradyrhizobium japonicum).